Consider the following 404-residue polypeptide: CinA-like protein (404 aa).

It belongs to the CinA family.

This chain is CinA-like protein, found in Deinococcus radiodurans (strain ATCC 13939 / DSM 20539 / JCM 16871 / CCUG 27074 / LMG 4051 / NBRC 15346 / NCIMB 9279 / VKM B-1422 / R1).